Consider the following 160-residue polypeptide: MAPK regulated corepressor interacting protein 2 (160 aa).

Methionine 1 bears the N-acetylmethionine mark. Residues 1–22 (MYTITKGPSKLVAQRRTGPTQQ) form a disordered region. Residue arginine 35 is modified to Omega-N-methylarginine. A disordered region spans residues 43–64 (LPAHLQPSAQTQGPWPLASSGP). Phosphoserine is present on serine 61. Arginine 65 is subject to Omega-N-methylarginine. Serine 82 carries the post-translational modification Phosphoserine.

The protein belongs to the MCRIP family. As to quaternary structure, interacts with DDX6. Interacts with MCRIP1.

It localises to the cytoplasm. It is found in the stress granule. The protein localises to the nucleus. The polypeptide is MAPK regulated corepressor interacting protein 2 (Mcrip2) (Mus musculus (Mouse)).